The chain runs to 208 residues: Small ribosomal subunit protein uS4 (208 aa).

An S4 RNA-binding domain is found at 98-161; the sequence is TRLDNTVYRL…RKIPVIAEAQ (64 aa).

The protein belongs to the universal ribosomal protein uS4 family. In terms of assembly, part of the 30S ribosomal subunit. Contacts protein S5. The interaction surface between S4 and S5 is involved in control of translational fidelity.

Its function is as follows. One of the primary rRNA binding proteins, it binds directly to 16S rRNA where it nucleates assembly of the body of the 30S subunit. Functionally, with S5 and S12 plays an important role in translational accuracy. The chain is Small ribosomal subunit protein uS4 from Maridesulfovibrio salexigens (strain ATCC 14822 / DSM 2638 / NCIMB 8403 / VKM B-1763) (Desulfovibrio salexigens).